The primary structure comprises 200 residues: ATP synthase subunit b (200 aa).

The helical transmembrane segment at 12–32 (ILSGLAVAVAILVPVLALASG) threads the bilayer.

It belongs to the ATPase B chain family. In terms of assembly, F-type ATPases have 2 components, F(1) - the catalytic core - and F(0) - the membrane proton channel. F(1) has five subunits: alpha(3), beta(3), gamma(1), delta(1), epsilon(1). F(0) has three main subunits: a(1), b(2) and c(10-14). The alpha and beta chains form an alternating ring which encloses part of the gamma chain. F(1) is attached to F(0) by a central stalk formed by the gamma and epsilon chains, while a peripheral stalk is formed by the delta and b chains.

It is found in the cell inner membrane. In terms of biological role, f(1)F(0) ATP synthase produces ATP from ADP in the presence of a proton or sodium gradient. F-type ATPases consist of two structural domains, F(1) containing the extramembraneous catalytic core and F(0) containing the membrane proton channel, linked together by a central stalk and a peripheral stalk. During catalysis, ATP synthesis in the catalytic domain of F(1) is coupled via a rotary mechanism of the central stalk subunits to proton translocation. Its function is as follows. Component of the F(0) channel, it forms part of the peripheral stalk, linking F(1) to F(0). This is ATP synthase subunit b from Trichlorobacter lovleyi (strain ATCC BAA-1151 / DSM 17278 / SZ) (Geobacter lovleyi).